The following is a 190-amino-acid chain: Probable thymidylate kinase (190 aa).

An ATP-binding site is contributed by glycine 9–threonine 16.

Belongs to the thymidylate kinase family.

It carries out the reaction dTMP + ATP = dTDP + ADP. This is Probable thymidylate kinase (tmk1) from Sulfurisphaera tokodaii (strain DSM 16993 / JCM 10545 / NBRC 100140 / 7) (Sulfolobus tokodaii).